The primary structure comprises 636 residues: DNA-directed RNA polymerase III subunit RPC3 (636 aa).

Positions 366 to 385 are disordered; sequence SMQRRSQERSTHQGQSHKRL. The leucine-zipper stretch occupies residues 563 to 584; the sequence is LAWNIANSIHKTEILKEENFTL.

This sequence belongs to the RNA polymerase beta chain family. In terms of assembly, component of the RNA polymerase III (Pol III) complex consisting of 17 subunits.

Its subcellular location is the nucleus. Functionally, DNA-dependent RNA polymerase catalyzes the transcription of DNA into RNA using the four ribonucleoside triphosphates as substrates. Specific core component of RNA polymerase III which synthesizes small RNAs, such as 5S rRNA and tRNAs. This Eremothecium gossypii (strain ATCC 10895 / CBS 109.51 / FGSC 9923 / NRRL Y-1056) (Yeast) protein is DNA-directed RNA polymerase III subunit RPC3 (RPC82).